We begin with the raw amino-acid sequence, 339 residues long: Ferredoxin--NADP reductase (339 aa).

Residues aspartate 32, glutamine 40, tyrosine 45, valine 85, phenylalanine 120, aspartate 287, and threonine 327 each contribute to the FAD site.

It belongs to the ferredoxin--NADP reductase type 2 family. Homodimer. FAD is required as a cofactor.

The enzyme catalyses 2 reduced [2Fe-2S]-[ferredoxin] + NADP(+) + H(+) = 2 oxidized [2Fe-2S]-[ferredoxin] + NADPH. This chain is Ferredoxin--NADP reductase, found in Wolbachia sp. subsp. Brugia malayi (strain TRS).